Reading from the N-terminus, the 388-residue chain is Dipeptidase verJ (388 aa).

The Zn(2+) site is built by His-29, Asp-31, and Glu-142. Residues His-169, Arg-243, and Asp-300 each contribute to the substrate site.

Belongs to the metallo-dependent hydrolases superfamily. Peptidase M19 family. Requires Zn(2+) as cofactor.

It catalyses the reaction an L-aminoacyl-L-amino acid + H2O = 2 an L-alpha-amino acid. The protein operates within mycotoxin biosynthesis. Dipeptidase; part of the gene cluster that mediates the biosynthesis of 11'-deoxyverticillin A, one of the dimeric epipolythiodioxopiperazines (ETPs) from the verticillin family that act as mycotoxins. 11'-deoxyverticillin A is required for normal conidiation. The nonribosomal peptide synthetase verP is speculated to be responsible for condensation of amino acids to form the carbon skeleton of verticillin, whereas the cluster-specific tailoring enzymes are involved in further modifications leading to the production of 11'-deoxyverticillin A. The chain is Dipeptidase verJ from Clonostachys rogersoniana.